The chain runs to 159 residues: Putative ribosomal RNA large subunit methyltransferase H (159 aa).

S-adenosyl-L-methionine is bound by residues leucine 76, glycine 108, and 127–132 (FSKMTF).

This sequence belongs to the RNA methyltransferase RlmH family.

It localises to the cytoplasm. The catalysed reaction is pseudouridine(1915) in 23S rRNA + S-adenosyl-L-methionine = N(3)-methylpseudouridine(1915) in 23S rRNA + S-adenosyl-L-homocysteine + H(+). Its function is as follows. Specifically methylates the pseudouridine at position 1915 (m3Psi1915) in 23S rRNA. The chain is Putative ribosomal RNA large subunit methyltransferase H from Methanococcus maripaludis (strain DSM 14266 / JCM 13030 / NBRC 101832 / S2 / LL).